Here is a 141-residue protein sequence, read N- to C-terminus: Large ribosomal subunit protein uL11 (141 aa).

Belongs to the universal ribosomal protein uL11 family. In terms of assembly, part of the ribosomal stalk of the 50S ribosomal subunit. Interacts with L10 and the large rRNA to form the base of the stalk. L10 forms an elongated spine to which L12 dimers bind in a sequential fashion forming a multimeric L10(L12)X complex. One or more lysine residues are methylated.

Functionally, forms part of the ribosomal stalk which helps the ribosome interact with GTP-bound translation factors. This is Large ribosomal subunit protein uL11 from Chlamydia felis (strain Fe/C-56) (Chlamydophila felis).